The following is a 776-amino-acid chain: Semaphorin-4F (776 aa).

The signal sequence occupies residues 1–39; sequence MLARAERPRPGPRPPPVFPFPPPLSLLLLLAILSAPVCG. Topologically, residues 40–665 are extracellular; it reads RVPRSVPRTS…GPSNRAHTVV (626 aa). In terms of domain architecture, Sema spans 47 to 515; that stretch reads RTSLPISEAD…SHTEVTQVNT (469 aa). Asparagine 69 is a glycosylation site (N-linked (GlcNAc...) asparagine). An intrachain disulfide couples cysteine 117 to cysteine 127. Asparagine 138 carries N-linked (GlcNAc...) asparagine glycosylation. 3 cysteine pairs are disulfide-bonded: cysteine 145/cysteine 154, cysteine 278/cysteine 389, and cysteine 302/cysteine 348. N-linked (GlcNAc...) asparagine glycosylation is present at asparagine 514. The region spanning 517-568 is the PSI domain; that stretch reads NCGRLQSCSECILAQDPVCAWSFRLDACVAHAGEHRGMVQDIESADVSSLCP. 3 disulfide bridges follow: cysteine 518–cysteine 535, cysteine 527–cysteine 544, and cysteine 592–cysteine 633. One can recognise an Ig-like C2-type domain in the interval 585 to 640; sequence VGHVVLPCSPSSAWASCVWHQPSGVTALTPRRDGLEVVVTPGAMGAYACECQEGGA. Residues 666–686 traverse the membrane as a helical segment; that stretch reads GAGLVGFLLGVLAASLTLLLI. Over 687-776 the chain is Cytoplasmic; sequence GRRQQRRRQR…PLATCDETSI (90 aa). A disordered region spans residues 702–741; it reads DKVGLDLGAPPSGTTSYSQDPPSPSPEDERLPLALGKRGS. Serine 724 and serine 726 each carry phosphoserine. The PDZ-binding motif lies at 774–776; it reads TSI.

The protein belongs to the semaphorin family. In terms of assembly, interacts (via PDZ-binding motif) with DLG4/SAP90 (via PDZ domain 2); this interaction may promote translocation of DLG4/SAP90 to the membrane. As to expression, expressed at low levels in the developing embryo. Expressed at high levels in the lung and adult central nervous system, including the dorsal root ganglia.

It localises to the cell membrane. Its subcellular location is the postsynaptic density. The protein localises to the perikaryon. It is found in the cell projection. The protein resides in the dendrite. In terms of biological role, probable cell surface receptor that regulates oligodendroglial precursor cell migration. Might also regulate differentiation of oligodendroglial precursor cells. Has growth cone collapse activity against retinal ganglion-cell axons. This Rattus norvegicus (Rat) protein is Semaphorin-4F (Sema4f).